Reading from the N-terminus, the 206-residue chain is Inner membrane-spanning protein YciB (206 aa).

The next 5 helical transmembrane spans lie at 50–70 (PILL…GYLL), 78–98 (GTLW…IYFH), 105–125 (WKPT…QIFL), 150–170 (LSWV…AFNF), and 173–193 (AAWV…FIII).

Belongs to the YciB family.

It localises to the cell inner membrane. In terms of biological role, plays a role in cell envelope biogenesis, maintenance of cell envelope integrity and membrane homeostasis. This is Inner membrane-spanning protein YciB from Herminiimonas arsenicoxydans.